We begin with the raw amino-acid sequence, 349 residues long: Probable FBD-associated F-box protein At5g38565 (349 aa).

Residues 1 to 47 (MDIFNGLPDDVLVKILSFVPTKVAVSTSILSKRWEFLWMWLPRLDFG) form the F-box domain. An FBD domain is found at 263–311 (CWNQPISVPECLLESLQIFNLSHYFGKQQDLDFVVYILKNACHLKTATI).

The sequence is that of Probable FBD-associated F-box protein At5g38565 from Arabidopsis thaliana (Mouse-ear cress).